Here is a 450-residue protein sequence, read N- to C-terminus: Probable transporter MCH1 (450 aa).

The next 12 helical transmembrane spans lie at alanine 32–tyrosine 52, valine 69–serine 89, methionine 96–phenylalanine 116, valine 127–threonine 147, leucine 157–leucine 177, leucine 199–methionine 219, proline 255–leucine 275, valine 290–isoleucine 309, methionine 320–alanine 340, leucine 355–tryptophan 375, alanine 378–phenylalanine 398, and valine 423–leucine 443.

The protein belongs to the major facilitator superfamily.

The protein resides in the vacuole membrane. In terms of biological role, probable transporter. The chain is Probable transporter MCH1 (MCH1) from Eremothecium gossypii (strain ATCC 10895 / CBS 109.51 / FGSC 9923 / NRRL Y-1056) (Yeast).